A 354-amino-acid chain; its full sequence is Chorismate synthase (354 aa).

R48 lines the NADP(+) pocket. Residues 125 to 127 (RAS), G277, 292 to 296 (KPIPS), and R318 contribute to the FMN site.

Belongs to the chorismate synthase family. Homotetramer. It depends on FMNH2 as a cofactor.

The catalysed reaction is 5-O-(1-carboxyvinyl)-3-phosphoshikimate = chorismate + phosphate. The protein operates within metabolic intermediate biosynthesis; chorismate biosynthesis; chorismate from D-erythrose 4-phosphate and phosphoenolpyruvate: step 7/7. Catalyzes the anti-1,4-elimination of the C-3 phosphate and the C-6 proR hydrogen from 5-enolpyruvylshikimate-3-phosphate (EPSP) to yield chorismate, which is the branch point compound that serves as the starting substrate for the three terminal pathways of aromatic amino acid biosynthesis. This reaction introduces a second double bond into the aromatic ring system. The protein is Chorismate synthase of Nitratidesulfovibrio vulgaris (strain ATCC 29579 / DSM 644 / CCUG 34227 / NCIMB 8303 / VKM B-1760 / Hildenborough) (Desulfovibrio vulgaris).